The following is a 76-amino-acid chain: Centromere protein W (76 aa).

It belongs to the CENP-W/WIP1 family. Heterodimer with CENPT; this dimer coassembles with CENPS-CENPX heterodimers at centromeres to form the tetrameric CENP-T-W-S-X complex, which is a subcomplex of the large constitutive centromere-associated network (CCAN, also known as the interphase centromere complex or ICEN). Interacts with NPM1.

It is found in the nucleus. The protein localises to the chromosome. The protein resides in the centromere. It localises to the kinetochore. Functionally, component of the CENPA-NAC (nucleosome-associated) complex, a complex that plays a central role in assembly of kinetochore proteins, mitotic progression and chromosome segregation. The CENPA-NAC complex recruits the CENPA-CAD (nucleosome distal) complex and may be involved in incorporation of newly synthesized CENPA into centromeres. Part of a nucleosome-associated complex that binds specifically to histone H3-containing nucleosomes at the centromere, as opposed to nucleosomes containing CENPA. Component of the heterotetrameric CENP-T-W-S-X complex that binds and supercoils DNA, and plays an important role in kinetochore assembly. CENPW has a fundamental role in kinetochore assembly and function. It is one of the inner kinetochore proteins, with most further proteins binding downstream. Required for normal chromosome organization and normal progress through mitosis. The chain is Centromere protein W (CENPW) from Gallus gallus (Chicken).